Consider the following 637-residue polypeptide: Extracellular metalloproteinase 10 (637 aa).

Positions 1–19 (MHGLLLAATLLSLPFNAVA) are cleaved as a signal peptide. Residues 20–245 (HVPPTTGLVR…VHNVVDYVAH (226 aa)) constitute a propeptide that is removed on maturation. Asparagine 282 carries an N-linked (GlcNAc...) asparagine glycan. Histidine 429 contributes to the Zn(2+) binding site. The active site involves glutamate 430. Histidine 433 is a Zn(2+) binding site. An N-linked (GlcNAc...) asparagine glycan is attached at asparagine 502.

Belongs to the peptidase M36 family. Zn(2+) is required as a cofactor.

It localises to the secreted. In terms of biological role, secreted metalloproteinase that allows assimilation of proteinaceous substrates. The polypeptide is Extracellular metalloproteinase 10 (MEP10) (Uncinocarpus reesii (strain UAMH 1704)).